Here is a 135-residue protein sequence, read N- to C-terminus: Actin-related protein 2/3 complex subunit 5B (135 aa).

It belongs to the ARPC5 family. In terms of assembly, component of the Arp2/3 complex composed of ARP2, ARP3, ARPC1/p41-ARC, ARPC2/p34-ARC, ARPC3/p21-ARC, ARPC4/p20-ARC and ARPC5/p16-ARC.

The protein resides in the cytoplasm. It is found in the cytoskeleton. The protein localises to the cell projection. Its function is as follows. Functions as a component of the Arp2/3 complex which is involved in regulation of actin polymerization and together with an activating nucleation-promoting factor (NPF) mediates the formation of branched actin networks. Arp2/3 complex plays a critical role in the control of cell morphogenesis via the modulation of cell polarity development. This is Actin-related protein 2/3 complex subunit 5B (ARPC5B) from Arabidopsis thaliana (Mouse-ear cress).